Consider the following 101-residue polypeptide: Protein Tat (101 aa).

Residues Met1–Asn24 form an interaction with human CREBBP region. Residues Met1 to Gly48 are transactivation. Residues Cys22, Cys25, and Cys27 each contribute to the Zn(2+) site. Residues Cys22 to Cys37 are cysteine-rich. An N6-acetyllysine; by host PCAF modification is found at Lys28. Cys30, His33, Cys34, and Cys37 together coordinate Zn(2+). The core stretch occupies residues Phe38–Gly48. Residues Gly48–Asp101 are disordered. A Nuclear localization signal, RNA-binding (TAR), and protein transduction motif is present at residues Arg49 to Ser57. The interval Arg49 to Glu86 is interaction with the host capping enzyme RNGTT. 2 positions are modified to N6-acetyllysine; by host EP300 and GCN5L2: Lys50 and Lys51. Asymmetric dimethylarginine; by host PRMT6 occurs at positions 52 and 53. A compositionally biased stretch (basic and acidic residues) spans Thr82–Asp101.

It belongs to the lentiviruses Tat family. Interacts with host CCNT1. Associates with the P-TEFb complex composed at least of Tat, P-TEFb (CDK9 and CCNT1), TAR RNA, RNA Pol II. Recruits the HATs CREBBP, TAF1/TFIID, EP300, PCAF and GCN5L2. Interacts with host KAT5/Tip60; this interaction targets the latter to degradation. Interacts with the host deacetylase SIRT1. Interacts with host capping enzyme RNGTT; this interaction stimulates RNGTT. Binds to host KDR, and to the host integrins ITGAV/ITGB3 and ITGA5/ITGB1. Interacts with host KPNB1/importin beta-1 without previous binding to KPNA1/importin alpha-1. Interacts with EIF2AK2. Interacts with host nucleosome assembly protein NAP1L1; this interaction may be required for the transport of Tat within the nucleus, since the two proteins interact at the nuclear rim. Interacts with host C1QBP/SF2P32; this interaction involves lysine-acetylated Tat. Interacts with the host chemokine receptors CCR2, CCR3 and CXCR4. Interacts with host DPP4/CD26; this interaction may trigger an anti-proliferative effect. Interacts with host LDLR. Interacts with the host extracellular matrix metalloproteinase MMP1. Interacts with host PRMT6; this interaction mediates Tat's methylation. Interacts with, and is ubiquitinated by MDM2/Hdm2. Interacts with host PSMC3 and HTATIP2. Interacts with STAB1; this interaction may overcome SATB1-mediated repression of IL2 and IL2RA (interleukin) in T cells by binding to the same domain than HDAC1. Interacts (when acetylated) with human CDK13, thereby increasing HIV-1 mRNA splicing and promoting the production of the doubly spliced HIV-1 protein Nef. Interacts with host TBP; this interaction modulates the activity of transcriptional pre-initiation complex. Interacts with host RELA. Interacts with host PLSCR1; this interaction negatively regulates Tat transactivation activity by altering its subcellular distribution. Post-translationally, asymmetrical arginine methylation by host PRMT6 seems to diminish the transactivation capacity of Tat and affects the interaction with host CCNT1. In terms of processing, acetylation by EP300, CREBBP, GCN5L2/GCN5 and PCAF regulates the transactivation activity of Tat. EP300-mediated acetylation of Lys-50 promotes dissociation of Tat from the TAR RNA through the competitive binding to PCAF's bromodomain. In addition, the non-acetylated Tat's N-terminus can also interact with PCAF. PCAF-mediated acetylation of Lys-28 enhances Tat's binding to CCNT1. Lys-50 is deacetylated by SIRT1. Polyubiquitination by host MDM2 does not target Tat to degradation, but activates its transactivation function and fosters interaction with CCNT1 and TAR RNA. Post-translationally, phosphorylated by EIF2AK2 on serine and threonine residues adjacent to the basic region important for TAR RNA binding and function. Phosphorylation of Tat by EIF2AK2 is dependent on the prior activation of EIF2AK2 by dsRNA.

It localises to the host nucleus. The protein localises to the host nucleolus. The protein resides in the host cytoplasm. It is found in the secreted. Transcriptional activator that increases RNA Pol II processivity, thereby increasing the level of full-length viral transcripts. Recognizes a hairpin structure at the 5'-LTR of the nascent viral mRNAs referred to as the transactivation responsive RNA element (TAR) and recruits the cyclin T1-CDK9 complex (P-TEFb complex) that will in turn hyperphosphorylate the RNA polymerase II to allow efficient elongation. The CDK9 component of P-TEFb and other Tat-activated kinases hyperphosphorylate the C-terminus of RNA Pol II that becomes stabilized and much more processive. Other factors such as HTATSF1/Tat-SF1, SUPT5H/SPT5, and HTATIP2 are also important for Tat's function. Besides its effect on RNA Pol II processivity, Tat induces chromatin remodeling of proviral genes by recruiting the histone acetyltransferases (HATs) CREBBP, EP300 and PCAF to the chromatin. This also contributes to the increase in proviral transcription rate, especially when the provirus integrates in transcriptionally silent region of the host genome. To ensure maximal activation of the LTR, Tat mediates nuclear translocation of NF-kappa-B by interacting with host RELA. Through its interaction with host TBP, Tat may also modulate transcription initiation. Tat can reactivate a latently infected cell by penetrating in it and transactivating its LTR promoter. In the cytoplasm, Tat is thought to act as a translational activator of HIV-1 mRNAs. Functionally, extracellular circulating Tat can be endocytosed by surrounding uninfected cells via the binding to several surface receptors such as CD26, CXCR4, heparan sulfate proteoglycans (HSPG) or LDLR. Neurons are rarely infected, but they internalize Tat via their LDLR. Through its interaction with nuclear HATs, Tat is potentially able to control the acetylation-dependent cellular gene expression. Modulates the expression of many cellular genes involved in cell survival, proliferation or in coding for cytokines or cytokine receptors. Tat plays a role in T-cell and neurons apoptosis. Tat induced neurotoxicity and apoptosis probably contribute to neuroAIDS. Circulating Tat also acts as a chemokine-like and/or growth factor-like molecule that binds to specific receptors on the surface of the cells, affecting many cellular pathways. In the vascular system, Tat binds to ITGAV/ITGB3 and ITGA5/ITGB1 integrins dimers at the surface of endothelial cells and competes with bFGF for heparin-binding sites, leading to an excess of soluble bFGF. The sequence is that of Protein Tat from Human immunodeficiency virus type 1 group M subtype J (isolate SE9173) (HIV-1).